The chain runs to 458 residues: Bifunctional protein GlmU (458 aa).

Positions 1–229 (MNKFAIVLAA…FDESLGVNDR (229 aa)) are pyrophosphorylase. UDP-N-acetyl-alpha-D-glucosamine-binding positions include 8-11 (LAAG), Lys22, Gln72, and 77-78 (GT). Residue Asp102 participates in Mg(2+) binding. Gly139, Glu154, Asn169, and Asn227 together coordinate UDP-N-acetyl-alpha-D-glucosamine. Asn227 is a binding site for Mg(2+). A linker region spans residues 230 to 250 (VALSQAEGTMRKRINHEHMVN). An N-acetyltransferase region spans residues 251–458 (GVTLIDPATT…AKKMPHYRGQ (208 aa)). UDP-N-acetyl-alpha-D-glucosamine contacts are provided by Arg332 and Lys350. Residue His362 is the Proton acceptor of the active site. UDP-N-acetyl-alpha-D-glucosamine is bound by residues Tyr365 and Asn376. Residues Ala379, Ser404, Ala422, and Arg439 each coordinate acetyl-CoA.

This sequence in the N-terminal section; belongs to the N-acetylglucosamine-1-phosphate uridyltransferase family. In the C-terminal section; belongs to the transferase hexapeptide repeat family. In terms of assembly, homotrimer. The cofactor is Mg(2+).

It localises to the cytoplasm. The enzyme catalyses alpha-D-glucosamine 1-phosphate + acetyl-CoA = N-acetyl-alpha-D-glucosamine 1-phosphate + CoA + H(+). It carries out the reaction N-acetyl-alpha-D-glucosamine 1-phosphate + UTP + H(+) = UDP-N-acetyl-alpha-D-glucosamine + diphosphate. It participates in nucleotide-sugar biosynthesis; UDP-N-acetyl-alpha-D-glucosamine biosynthesis; N-acetyl-alpha-D-glucosamine 1-phosphate from alpha-D-glucosamine 6-phosphate (route II): step 2/2. Its pathway is nucleotide-sugar biosynthesis; UDP-N-acetyl-alpha-D-glucosamine biosynthesis; UDP-N-acetyl-alpha-D-glucosamine from N-acetyl-alpha-D-glucosamine 1-phosphate: step 1/1. It functions in the pathway bacterial outer membrane biogenesis; LPS lipid A biosynthesis. Catalyzes the last two sequential reactions in the de novo biosynthetic pathway for UDP-N-acetylglucosamine (UDP-GlcNAc). The C-terminal domain catalyzes the transfer of acetyl group from acetyl coenzyme A to glucosamine-1-phosphate (GlcN-1-P) to produce N-acetylglucosamine-1-phosphate (GlcNAc-1-P), which is converted into UDP-GlcNAc by the transfer of uridine 5-monophosphate (from uridine 5-triphosphate), a reaction catalyzed by the N-terminal domain. This Lactococcus lactis subsp. cremoris (strain SK11) protein is Bifunctional protein GlmU.